Here is a 431-residue protein sequence, read N- to C-terminus: Fumarylacetoacetase (431 aa).

Residue Asp-133 coordinates Ca(2+). Tyr-135 lines the substrate pocket. His-140 serves as the catalytic Proton acceptor. A substrate-binding site is contributed by Arg-149. Ca(2+)-binding residues include Glu-209, Glu-211, and Asp-243. Asp-243 contributes to the Mg(2+) binding site. 2 residues coordinate substrate: Gln-250 and Tyr-254. Mg(2+)-binding residues include Lys-263 and Thr-267. Position 362 (Thr-362) interacts with substrate.

It belongs to the FAH family. It depends on Ca(2+) as a cofactor. Mg(2+) serves as cofactor.

It carries out the reaction 4-fumarylacetoacetate + H2O = acetoacetate + fumarate + H(+). The protein operates within amino-acid degradation; L-phenylalanine degradation; acetoacetate and fumarate from L-phenylalanine: step 6/6. Its function is as follows. Use of phenylalanine and phenylacetate as a carbon source. The protein is Fumarylacetoacetase (fahA) of Emericella nidulans (strain FGSC A4 / ATCC 38163 / CBS 112.46 / NRRL 194 / M139) (Aspergillus nidulans).